The primary structure comprises 63 residues: Large ribosomal subunit protein uL29 (63 aa).

It belongs to the universal ribosomal protein uL29 family.

The chain is Large ribosomal subunit protein uL29 from Colwellia psychrerythraea (strain 34H / ATCC BAA-681) (Vibrio psychroerythus).